Reading from the N-terminus, the 166-residue chain is MLVIHRRIDPQPVWAAELHLTFEARSKSRLRCFSAEGEDVGLFLERGQPPLYDGECLQAEDGRIVRVCARPEQLLHVTCANAFELTRAAYHLGNRHVALQVGDGWLRLLDDYVLKAMLEQLGAQVESIEAPFQPEHGAYGGGHHHSRHGDEDFNYAPKLHQFGVRL.

This sequence belongs to the UreE family.

It is found in the cytoplasm. Functionally, involved in urease metallocenter assembly. Binds nickel. Probably functions as a nickel donor during metallocenter assembly. The sequence is that of Urease accessory protein UreE from Pseudomonas fluorescens (strain Pf0-1).